Consider the following 125-residue polypeptide: uncharacterized protein (125 aa).

Residues 1 to 46 (MFFDTKVLNYPTIHKSISMASTMQRTSSSAASNERQLSQLQRRAPS) constitute a chloroplast transit peptide.

The protein localises to the plastid. It is found in the chloroplast. This is an uncharacterized protein from Arabidopsis thaliana (Mouse-ear cress).